A 202-amino-acid polypeptide reads, in one-letter code: MASPRLLALLLLLVGAFNAAAAESIRETEVINPQDLLEGRYFSGDLPDDEDVGGPGQEPDDFEWSGSGDLEGPEDKHMLPEVTHPLVPLDNHIPERTGPGGRVPTEPKELEENEVIPKRMSPFDGDEDVSNKVSMSSTAQGSNIFERTEVLSALIVGGIVGILFAVFLVLLLVYRMKKKDEGSYDLGKKPIYKKAPTNEFYA.

Positions Met-1 to Ala-22 are cleaved as a signal peptide. The Extracellular segment spans residues Glu-23–Ser-152. Disordered regions lie at residues Tyr-41–Asp-75 and Val-87–Glu-112. The O-linked (Xyl...) (glycosaminoglycan) serine glycan is linked to Ser-43. A compositionally biased stretch (acidic residues) spans Leu-46–Glu-63. O-linked (Xyl...) (glycosaminoglycan) serine glycosylation is found at Ser-65 and Ser-67. Residues Ala-153–Val-173 form a helical membrane-spanning segment. The Cytoplasmic portion of the chain corresponds to Tyr-174–Ala-202.

It belongs to the syndecan proteoglycan family. Homodimer. Interacts with CDCP1 and SDCBP. Interacts (via its cytoplasmic domain) with GIPC (via its PDZ domain). Interacts (via its cytoplasmic domain) with NUDT16L1. Interacts with DNM2; this interaction is markedly enhanced at focal ahesion site upon induction of focal adhesions and stress-fiber formation. Shedding, cleavage of the extracellular domain to release a soluble form, is enhanced by a number of factors such as heparanase, growth factor receptor action for example by thrombin or EGF. Physiological events such as stress or wound healing can activate the shedding. PMA-mediated shedding is inhibited by TIMP3. In terms of processing, O-glycosylated; contains both chondroitin sulfate and heparan sulfate. Ser-43, Ser-65 and Ser-67 can all be modified by either chondroitin sulfate or heparan sulfate, and the protein exists in forms that contain only chondroitin sulfate, only heparan sulfate and both chondroitin sulfate and heparan sulfate.

It is found in the membrane. Its subcellular location is the secreted. Its function is as follows. Cell surface proteoglycan which regulates exosome biogenesis in concert with SDCBP and PDCD6IP. This chain is Syndecan-4, found in Sus scrofa (Pig).